The sequence spans 240 residues: 1-(5-phosphoribosyl)-5-[(5-phosphoribosylamino)methylideneamino] imidazole-4-carboxamide isomerase (240 aa).

Catalysis depends on aspartate 9, which acts as the Proton acceptor. Residue aspartate 131 is the Proton donor of the active site.

Belongs to the HisA/HisF family.

The protein resides in the cytoplasm. The catalysed reaction is 1-(5-phospho-beta-D-ribosyl)-5-[(5-phospho-beta-D-ribosylamino)methylideneamino]imidazole-4-carboxamide = 5-[(5-phospho-1-deoxy-D-ribulos-1-ylimino)methylamino]-1-(5-phospho-beta-D-ribosyl)imidazole-4-carboxamide. It participates in amino-acid biosynthesis; L-histidine biosynthesis; L-histidine from 5-phospho-alpha-D-ribose 1-diphosphate: step 4/9. The protein is 1-(5-phosphoribosyl)-5-[(5-phosphoribosylamino)methylideneamino] imidazole-4-carboxamide isomerase of Azobacteroides pseudotrichonymphae genomovar. CFP2.